Here is a 475-residue protein sequence, read N- to C-terminus: FAD-dependent monooxygenase sdgC (475 aa).

Residues 1–23 form the signal peptide; sequence MDKRSFKVIVVGGSIAGLTLAHS. The FAD site is built by glutamate 35, glycine 49, and arginine 126. Asparagine 236 carries N-linked (GlcNAc...) asparagine glycosylation. Alanine 330 provides a ligand contact to FAD. The helical transmembrane segment at 446–466 threads the bilayer; the sequence is ISGVLLLVIPIIALVYGYSVI.

It belongs to the paxM FAD-dependent monooxygenase family. It depends on FAD as a cofactor.

The protein resides in the membrane. It functions in the pathway secondary metabolite biosynthesis. Its function is as follows. FAD-dependent monooxygenase; part of the gene cluster that mediates the biosynthesis of the polyenes aspernidgulenes. The carbon backbone of aspernidgulenes is synthesized by the HR-PKS sdgA, which accepts acetyl-CoA as the starter unit and performs malonyl-CoA extensions as well as regioselective methylation and reduction. The resulting nonaketide offloads the HR-PKS by intramolecular lactonization to yield the 5,6-dihydro-alpha-pyrone-containing hexaenoic acids preaspernidgulene A1 and A2. The FAD-dependent monooxygenase sdgC then installs the first epoxide on the penultimate double bond. Subsequently, the FAD-dependent monooxygenase sdgF presumably generates a ketone intermediate through Meinwald rearrangement involving a hydride shift. Next, sdgC introduces another epoxide on the last olefin of the ketone intermediate after E/Z isomerization. The epoxide hydrolase sdgD then catalyzes stereospecific cyclization of the 5,6-dihydro-alpha-pyrone and opening of the epoxide ring to form an oxygenated trimethylcyclopentanone and an oxabicyclo[2.2.1]heptane unit. Finally, the bicyclic unit undergoes hydrolytic cleavage, either spontaneously or catalyzed by sdgD, to assemble the dimethyl-gamma-lactone moiety in aspernidgulene A1. In Emericella nidulans (strain FGSC A4 / ATCC 38163 / CBS 112.46 / NRRL 194 / M139) (Aspergillus nidulans), this protein is FAD-dependent monooxygenase sdgC.